The following is a 3567-amino-acid chain: Sushi, von Willebrand factor type A, EGF and pentraxin domain-containing protein 1 (3567 aa).

A signal peptide spans 1-17 (MWSRLAFCCWALALVSG). The 182-residue stretch at 84–265 (ELVFLVDESS…LARRALHEDL (182 aa)) folds into the VWFA domain. An N-linked (GlcNAc...) asparagine glycan is attached at Asn187. 3 consecutive Sushi domains span residues 377–436 (VHCP…FCRV), 437–496 (RTCP…RCVE), and 497–561 (RHCA…VCKD). Intrachain disulfides connect Cys379/Cys421, Cys407/Cys434, Cys439/Cys481, Cys467/Cys494, Cys499/Cys544, and Cys530/Cys559. HYR domains are found at residues 560 to 644 (KDVE…KVID) and 645 to 724 (VEPP…VIKG). The Sushi 4 domain occupies 725–789 (SPCEVPFTPV…YSTEWPDCAI (65 aa)). Cystine bridges form between Cys727–Cys769, Cys753–Cys787, Cys1196–Cys1207, Cys1201–Cys1216, Cys1218–Cys1227, Cys1234–Cys1245, Cys1239–Cys1254, Cys1256–Cys1265, Cys1272–Cys1283, Cys1277–Cys1292, Cys1294–Cys1303, Cys1310–Cys1321, Cys1315–Cys1330, Cys1332–Cys1341, Cys1348–Cys1359, Cys1353–Cys1368, Cys1370–Cys1379, Cys1386–Cys1397, Cys1391–Cys1406, and Cys1408–Cys1417. The 37-residue stretch at 1192 to 1228 (VFHECFLNPCHNSGTCQQLGRGYVCLCPPGYTGLKCE) folds into the EGF-like 1 domain. The EGF-like 2; calcium-binding domain maps to 1230–1266 (DIDECSSLPCLNGGICRDQVGGFTCECSLGYSGQICE). One can recognise an EGF-like 3; calcium-binding domain in the interval 1268–1304 (NINECISSPCLNKGTCTDGLASYRCTCVKGYMGVHCE). Positions 1306 to 1342 (DVNECQSSPCLNNAVCKDQVGGFSCKCPPGFLGTRCE) constitute an EGF-like 4; calcium-binding domain. The EGF-like 5; calcium-binding domain occupies 1344-1380 (NVDECLSQPCQNGATCKDGANSFRCQCPAGFTGTHCE). Positions 1382–1418 (NINECQSNPCRNQATCVDELNSYSCKCQPGFSGHRCE) constitute an EGF-like 6; calcium-binding domain. In terms of domain architecture, Pentraxin (PTX) spans 1423–1627 (SGFNLDFEVS…VKVDSSSMFC (205 aa)). 2 Sushi domains span residues 1628–1686 (SDCP…HCER) and 1687–1744 (IRCG…SCLD). Cystine bridges form between Cys1630–Cys1671, Cys1657–Cys1684, Cys1689–Cys1729, Cys1715–Cys1742, Cys1748–Cys1760, Cys1754–Cys1769, Cys1771–Cys1782, Cys1788–Cys1828, Cys1814–Cys1841, Cys1846–Cys1886, Cys1872–Cys1899, Cys1904–Cys1944, Cys1930–Cys1957, Cys1962–Cys2002, Cys1988–Cys2015, Cys2020–Cys2060, Cys2046–Cys2077, Cys2082–Cys2125, Cys2111–Cys2140, Cys2145–Cys2185, Cys2171–Cys2198, Cys2203–Cys2244, Cys2230–Cys2258, Cys2263–Cys2303, Cys2289–Cys2317, Cys2322–Cys2362, Cys2348–Cys2375, Cys2380–Cys2421, Cys2407–Cys2434, Cys2439–Cys2479, Cys2465–Cys2492, Cys2497–Cys2537, Cys2523–Cys2550, Cys2555–Cys2595, and Cys2581–Cys2607. Positions 1744-1783 (DVDECAVGSDCSEHASCLNTNGSYVCSCNPPYTGDGKNCA) constitute an EGF-like 7; calcium-binding domain. Sushi domains lie at 1780-1843 (KNCA…SCEA), 1844-1901 (ISCG…VCEL), 1902-1959 (VKCS…SCQL), 1960-2017 (VSCG…QCLA), 2018-2079 (VSCD…RCIA), 2080-2142 (HFCE…QCIP), 2143-2200 (VRCG…TCHP), 2201-2260 (VSCN…SCTP), 2261-2319 (LNCG…KCVP), 2320-2377 (TKCA…ICKM), 2378-2436 (VLCP…ECVP), 2437-2494 (VECP…MCKP), 2495-2552 (IECP…SCDA), and 2553-2609 (IHCS…TCVP). The tract at residues 2638–2645 (DMMEVPYL) is important for the interaction with integrin ITGA9:ITGB1. Sushi domains are found at residues 2660-2711 (NTKE…SCIS), 2712-2769 (IECD…RCEA), 2770-2827 (ISCS…MCIP), 2828-2885 (VDCG…SCMP), 2886-2943 (VRCP…VCKP), 2944-3001 (ATCG…SCLP), 3002-3057 (CRCS…LCEH), 3058-3115 (AQCG…TCEP), 3116-3174 (LSCG…TCSP), 3175-3234 (KKCP…SCIP), 3235-3292 (VVCG…VCRE), 3293-3350 (NRCE…LCKP), 3351-3409 (NPCP…RCEK), and 3410-3466 (ISCG…VCRA). Cystine bridges form between Cys2682–Cys2709, Cys2714–Cys2754, Cys2740–Cys2767, Cys2772–Cys2812, Cys2798–Cys2825, Cys2830–Cys2870, Cys2856–Cys2883, Cys2888–Cys2928, Cys2914–Cys2941, Cys2946–Cys2986, Cys2972–Cys2999, Cys3004–Cys3043, Cys3029–Cys3055, Cys3060–Cys3100, Cys3086–Cys3113, Cys3118–Cys3159, Cys3144–Cys3172, Cys3177–Cys3217, Cys3203–Cys3232, Cys3237–Cys3277, Cys3263–Cys3290, Cys3295–Cys3335, Cys3321–Cys3348, Cys3353–Cys3394, Cys3380–Cys3407, Cys3412–Cys3452, Cys3438–Cys3464, Cys3500–Cys3510, Cys3504–Cys3516, Cys3518–Cys3527, Cys3532–Cys3542, Cys3536–Cys3548, and Cys3550–Cys3559. 2 consecutive EGF-like domains span residues 3496–3528 (EEPI…SRCH) and 3529–3560 (TATC…HDCS).

Interacts (via Sushi domain 21) with ITGA9:ITGB1; thereby inhibits Ca(2+) intracellular signaling and as a result represses vasocontraction. Interacts (via Sushi domain 21) with ITGA4:ITGB1; thereby inhibits Ca(2+) intracellular signaling and as a result represses vasocontraction. Interacts with ANGPT1 and ANGPT2. Interacts with PEAR1 (via extracellular domain). Interacts with HSPG2, TLN1, FN1, COPA, CCT2, IQGAP1, LAMC1 and NID1. Interacts (via C-terminus) with TIE1. Expressed in the media layer of the arterial wall (at protein level). Highly expressed in lung and placenta, weakly expressed in the kidney, heart, brain and spleen. Also expressed in bone and periosteum, but not in cartilage and skeletal muscle.

The protein localises to the secreted. It is found in the nucleus. The protein resides in the cytoplasm. It localises to the membrane. Functionally, required for morphological development, cell alignment and migration of lymphatic endothelial cells during embryonic development, potentially via modulation of ANGPT2-TIE1 signaling and subsequent activation of FOXC2 transcription. Required for embryonic lymphatic vascular development, via mediating the correct formation of the first lymphovenous contact site and tight association of the lymphatic endothelium with the venous endothelium. Represses PRKCA-mediated L-type voltage-gated channel Ca(2+) influx and ROCK-mediated calcium sensitivity in vascular smooth muscle cells, via its interaction with integrins, thereby inhibiting vasocontraction. Promotes platelet activation, via its interaction with PEAR1 and subsequent activation of AKT/mTOR signaling. Plays a role in epidermal development and keratinocyte differentiation, independent of cell-cell adhesion. May play a role in initial cell attachment of stromal osteogenic cells. May promote myoblast cell adhesion when in the presence of integrin ITGA9:ITGB1. This chain is Sushi, von Willebrand factor type A, EGF and pentraxin domain-containing protein 1 (Svep1), found in Mus musculus (Mouse).